A 257-amino-acid chain; its full sequence is Large ribosomal subunit protein uL2 (257 aa).

Glycyl lysine isopeptide (Lys-Gly) (interchain with G-Cter in SUMO2) cross-links involve residues lysine 42 and lysine 149. The interval 207 to 232 (VEHPFGGGNHQHIGKPSTIRRDAPAG) is disordered. Residue histidine 216 is modified to (3S)-3-hydroxyhistidine. Residues lysine 234 and lysine 250 each participate in a glycyl lysine isopeptide (Lys-Gly) (interchain with G-Cter in SUMO2) cross-link.

Belongs to the universal ribosomal protein uL2 family. As to quaternary structure, component of the large ribosomal subunit. Interacts with CRY1. Post-translationally, hydroxylated on His-216 by RIOX1. The modification is impaired by hypoxia.

The protein localises to the cytoplasm. Functionally, component of the large ribosomal subunit. The ribosome is a large ribonucleoprotein complex responsible for the synthesis of proteins in the cell. The chain is Large ribosomal subunit protein uL2 (RPL8) from Bos taurus (Bovine).